We begin with the raw amino-acid sequence, 852 residues long: DNA mismatch repair protein MutS (852 aa).

Position 615 to 622 (615 to 622 (GPNMAGKS)) interacts with ATP.

The protein belongs to the DNA mismatch repair MutS family.

In terms of biological role, this protein is involved in the repair of mismatches in DNA. It is possible that it carries out the mismatch recognition step. This protein has a weak ATPase activity. In Thermodesulfovibrio yellowstonii (strain ATCC 51303 / DSM 11347 / YP87), this protein is DNA mismatch repair protein MutS.